A 640-amino-acid chain; its full sequence is Large subunit GTPase 1 homolog (640 aa).

Residues W165 to P426 enclose the CP-type G domain. Residue N213–D216 coordinates GTP. The segment at A251–N341 is disordered. Acidic residues-rich tracts occupy residues E253 to E270, E290 to D304, and E320 to P331. Polar residues predominate over residues E332–N341. Residues G375 to S382 and D419 to G422 contribute to the GTP site. Positions G602–A640 are disordered. A compositionally biased stretch (basic residues) spans P618 to A640.

The protein belongs to the TRAFAC class YlqF/YawG GTPase family. LSG1 subfamily.

The protein localises to the cytoplasm. Its subcellular location is the endoplasmic reticulum. It localises to the nucleus. It is found in the cajal body. The catalysed reaction is GTP + H2O = GDP + phosphate + H(+). In terms of biological role, functions as a GTPase. May act by mediating the release of NMD3 from the 60S ribosomal subunit after export into the cytoplasm during the 60S ribosomal subunit maturation. The chain is Large subunit GTPase 1 homolog from Danio rerio (Zebrafish).